Consider the following 581-residue polypeptide: Ketol-acid reductoisomerase, chloroplastic (581 aa).

The transit peptide at 1–50 (MAAVTSSCSTAISASSKTLAKPVAASFAPTNLSFSKLSPQSIRARRSITV) directs the protein to the chloroplast. Residues 92–290 (VRGGRDLFHL…ALGSPFTFAT (199 aa)) enclose the KARI N-terminal Rossmann domain. NADP(+)-binding positions include 113 to 120 (GVIGWGSQ), 146 to 151 (RKGSSS), and 185 to 189 (SDSAQ). Residue His-210 is part of the active site. KARI C-terminal knotted domains are found at residues 291–439 (TLEQ…RPAG) and 440–576 (DLGP…RPEL). Positions 299, 303, 476, and 480 each coordinate Mg(2+). Ser-502 contacts substrate.

Belongs to the ketol-acid reductoisomerase family. Homodimer. The cofactor is Mg(2+).

The protein resides in the plastid. Its subcellular location is the chloroplast. It carries out the reaction (2R)-2,3-dihydroxy-3-methylbutanoate + NADP(+) = (2S)-2-acetolactate + NADPH + H(+). The enzyme catalyses (2R,3R)-2,3-dihydroxy-3-methylpentanoate + NADP(+) = (S)-2-ethyl-2-hydroxy-3-oxobutanoate + NADPH + H(+). It functions in the pathway amino-acid biosynthesis; L-isoleucine biosynthesis; L-isoleucine from 2-oxobutanoate: step 2/4. It participates in amino-acid biosynthesis; L-valine biosynthesis; L-valine from pyruvate: step 2/4. The chain is Ketol-acid reductoisomerase, chloroplastic (PGAAIR) from Pisum sativum (Garden pea).